Consider the following 179-residue polypeptide: Putative endogenous retrovirus group FC1 Env polyprotein (179 aa).

Positions methionine 1–serine 22 are cleaved as a signal peptide. The tract at residues asparagine 23–valine 179 is truncated surface protein. Residue asparagine 69 is glycosylated (N-linked (GlcNAc...) asparagine).

The protein belongs to the gamma type-C retroviral envelope protein family. HERV class-I F(c)1 env subfamily.

It localises to the virion. Retroviral envelope proteins mediate receptor recognition and membrane fusion during early infection. Endogenous envelope proteins may have kept, lost or modified their original function during evolution. The sequence is that of Putative endogenous retrovirus group FC1 Env polyprotein (ERVFC1) from Gorilla gorilla gorilla (Western lowland gorilla).